Here is a 445-residue protein sequence, read N- to C-terminus: MSHDGKEEPGIAKKINSVDDIIIKCQCWVQKNDEERLAEILSINTRKAPPKFYVHYVNYNKRLDEWITTDRINLDKEVLYPKLKATDEDNKKQKKKKATNTSETPQDSLQDGVDGFSRENTDVMDLDNLNVQGIKDENISHEDEIKKLRTSGSMTQNPHEVARVRNLNRIIMGKYEIEPWYFSPYPIELTDEDFIYIDDFTLQYFGSKKQYERYRKKCTLRHPPGNEIYRDDYVSFFEIDGRKQRTWCRNLCLLSKLFLDHKTLYYDVDPFLFYCMTRRDELGHHLVGYFSKEKESADGYNVACILTLPQYQRMGYGKLLIEFSYELSKKENKVGSPEKPLSDLGLLSYRAYWSDTLITLLVEHQKEITIDEISSMTSMTTTDILHTAKTLNILRYYKGQHIIFLNEDILDRYNRLKAKKRRTIDPNRLIWKPPVFTASQLRFAW.

S17 is modified (phosphoserine). Positions I22 to L74 constitute a Tudor-knot domain. Residues E88–D114 form a disordered region. A compositionally biased stretch (polar residues) spans T99–L109. Residues A162–P433 form the MYST-type HAT domain. The C2HC MYST-type; degenerate zinc-finger motif lies at I195–L220. The short motif at R245–Y266 is the ESA1-RPD3 motif element. K262 carries the N6-acetyllysine; by autocatalysis modification. Acetyl-CoA-binding positions include A303–T307 and Q312–K318. Residue E338 is the Proton donor/acceptor of the active site. S342 is an acetyl-CoA binding site.

Belongs to the MYST (SAS/MOZ) family. As to quaternary structure, component of the NuA4 histone acetyltransferase complex composed of at least ACT1, ARP4, EAF3, EAF5, EAF6, EAF7, EPL1, ESA1, SWC4, TRA1, VID21, YAF9 and YNG2. The complex interacts with histones H4 (HHF1 and HHF2), H3 (HHT1 and HHT2) and H2A (HTA1 and HTA2). Post-translationally, autoacetylation at Lys-262 is required for proper function.

It catalyses the reaction L-lysyl-[histone] + acetyl-CoA = N(6)-acetyl-L-lysyl-[histone] + CoA + H(+). It carries out the reaction L-lysyl-[protein] + acetyl-CoA = N(6)-acetyl-L-lysyl-[protein] + CoA + H(+). The enzyme catalyses 2-hydroxyisobutanoyl-CoA + L-lysyl-[protein] = N(6)-(2-hydroxyisobutanoyl)-L-lysyl-[protein] + CoA + H(+). The catalysed reaction is (2E)-butenoyl-CoA + L-lysyl-[protein] = N(6)-(2E)-butenoyl-L-lysyl-[protein] + CoA + H(+). Catalytic component of the NuA4 histone acetyltransferase (HAT), a multiprotein complex involved in epigenetic transcriptional activation of selected genes principally by acetylation of nucleosomal histones H4, H3, H2B, H2A and H2A variant H2A.Z. Acetylates histone H4 to form H4K5ac, H4K8ac, H4K12ac and H4K16ac, histone H3 to form H3K14ac, histone H2B to form H2BK16ac, histone H2A to form H2AK4ac and H2AK7ac, and histone variant H2A.Z to form H2A.ZK14ac. Acetylation of histones gives a specific tag for epigenetic transcription initiation and elongation. Acetylation of histone H4 is essential for DNA double-strand break repair through homologous recombination. Involved in cell cycle progression. Recruitment to promoters depends on H3K4me. Also acetylates non-histone proteins, such as ATG3 and PAH1. Regulates autophagy by acetylating ATG3, controlling interaction the interaction between ATG3 and ATG8 and ATG8 lipidation. Acts as a regulator of fatty-acid-induced triacylglycerol synthesis by catalyzing acetylation of PAH1, thereby promoting the synthesis of diacylglycerol. In addition to protein acetyltransferase, can use different acyl-CoA substrates, such as 2-hydroxyisobutanoyl-CoA (2-hydroxyisobutyryl-CoA) or (2E)-butenoyl-CoA (crotonyl-CoA), and is able to mediate protein 2-hydroxyisobutyrylation and crotonylation, respectively. Catalyzes histone crotonylation. The polypeptide is Histone acetyltransferase ESA1 (Saccharomyces cerevisiae (strain ATCC 204508 / S288c) (Baker's yeast)).